The sequence spans 338 residues: tRNA N6-adenosine threonylcarbamoyltransferase (338 aa).

Residues His-111 and His-115 each coordinate Fe cation. Residues 134 to 138 (LVSGG), Asp-167, Gly-180, and Asn-272 each bind substrate. Position 300 (Asp-300) interacts with Fe cation.

It belongs to the KAE1 / TsaD family. The cofactor is Fe(2+).

The protein localises to the cytoplasm. The enzyme catalyses L-threonylcarbamoyladenylate + adenosine(37) in tRNA = N(6)-L-threonylcarbamoyladenosine(37) in tRNA + AMP + H(+). Its function is as follows. Required for the formation of a threonylcarbamoyl group on adenosine at position 37 (t(6)A37) in tRNAs that read codons beginning with adenine. Is involved in the transfer of the threonylcarbamoyl moiety of threonylcarbamoyl-AMP (TC-AMP) to the N6 group of A37, together with TsaE and TsaB. TsaD likely plays a direct catalytic role in this reaction. In Vibrio parahaemolyticus serotype O3:K6 (strain RIMD 2210633), this protein is tRNA N6-adenosine threonylcarbamoyltransferase.